The sequence spans 494 residues: Guanosine-5'-triphosphate,3'-diphosphate pyrophosphatase (494 aa).

This sequence belongs to the GppA/Ppx family. GppA subfamily.

The enzyme catalyses guanosine 3'-diphosphate 5'-triphosphate + H2O = guanosine 3',5'-bis(diphosphate) + phosphate + H(+). It functions in the pathway purine metabolism; ppGpp biosynthesis; ppGpp from GTP: step 2/2. Its function is as follows. Catalyzes the conversion of pppGpp to ppGpp. Guanosine pentaphosphate (pppGpp) is a cytoplasmic signaling molecule which together with ppGpp controls the 'stringent response', an adaptive process that allows bacteria to respond to amino acid starvation, resulting in the coordinated regulation of numerous cellular activities. This chain is Guanosine-5'-triphosphate,3'-diphosphate pyrophosphatase, found in Escherichia coli (strain 55989 / EAEC).